A 91-amino-acid chain; its full sequence is Co-chaperonin GroES (91 aa).

The protein belongs to the GroES chaperonin family. In terms of assembly, heptamer of 7 subunits arranged in a ring. Interacts with the chaperonin GroEL.

It localises to the cytoplasm. Functionally, together with the chaperonin GroEL, plays an essential role in assisting protein folding. The GroEL-GroES system forms a nano-cage that allows encapsulation of the non-native substrate proteins and provides a physical environment optimized to promote and accelerate protein folding. GroES binds to the apical surface of the GroEL ring, thereby capping the opening of the GroEL channel. This is Co-chaperonin GroES from Oenococcus oeni (strain ATCC BAA-331 / PSU-1).